Reading from the N-terminus, the 305-residue chain is Oxygen-dependent coproporphyrinogen-III oxidase (305 aa).

Ser99 serves as a coordination point for substrate. His103 and His113 together coordinate a divalent metal cation. The active-site Proton donor is His113. Asn115–Arg117 provides a ligand contact to substrate. A divalent metal cation-binding residues include His152 and His182. The important for dimerization stretch occupies residues Tyr247–Glu282. Substrate is bound at residue Gly265–Arg267.

Belongs to the aerobic coproporphyrinogen-III oxidase family. In terms of assembly, homodimer. It depends on a divalent metal cation as a cofactor.

It localises to the cytoplasm. The catalysed reaction is coproporphyrinogen III + O2 + 2 H(+) = protoporphyrinogen IX + 2 CO2 + 2 H2O. It participates in porphyrin-containing compound metabolism; protoporphyrin-IX biosynthesis; protoporphyrinogen-IX from coproporphyrinogen-III (O2 route): step 1/1. In terms of biological role, involved in the heme biosynthesis. Catalyzes the aerobic oxidative decarboxylation of propionate groups of rings A and B of coproporphyrinogen-III to yield the vinyl groups in protoporphyrinogen-IX. The sequence is that of Oxygen-dependent coproporphyrinogen-III oxidase from Vibrio cholerae serotype O1 (strain M66-2).